The primary structure comprises 285 residues: Cold sensitive U2 snRNA suppressor 2 (285 aa).

In terms of domain architecture, RRM 1 spans 45 to 130 (TSIYISGLPT…KQIRVERAQF (86 aa)). Basic and acidic residues predominate over residues 135 to 149 (GDNMHGKENDLKEFN). A disordered region spans residues 135–154 (GDNMHGKENDLKEFNGPEPP). Ser163 is modified (phosphoserine). One can recognise an RRM 2 domain in the interval 183 to 265 (RTVIFANVFN…QKLLAFISGD (83 aa)). A disordered region spans residues 265 to 285 (DENTSSTSDKNEDSEVEDDLI). The segment covering 276–285 (EDSEVEDDLI) has biased composition (acidic residues).

The protein belongs to the HTATSF1 family. As to quaternary structure, interacts with PRP11. Associates with the U2 snRNA.

Functionally, U2 snRNP protein which helps to refold U2 into a structure favorable for its binding to SF3b and SF3a prior to spliceosome assembly. Mediates functional interactions between U2 RNA and PRP5. Enforces ATP dependence during formation of the prespliceosome by brokering an interaction between PRP5 and the U2 snRNP that depends on correct U2 RNA structure. The chain is Cold sensitive U2 snRNA suppressor 2 (CUS2) from Saccharomyces cerevisiae (strain ATCC 204508 / S288c) (Baker's yeast).